The following is a 310-amino-acid chain: Olfactory receptor 5H14 (310 aa).

The Extracellular segment spans residues 1-28; sequence MEEENATLLTEFVLTGFLYQPQWKIPLF. Asn5 carries an N-linked (GlcNAc...) asparagine glycan. A helical transmembrane segment spans residues 29-49; the sequence is LAFLVIYLITIMGNLGLIAVI. Residues 50–56 lie on the Cytoplasmic side of the membrane; the sequence is WKDPHLH. A helical membrane pass occupies residues 57-77; sequence IPMYLLLGNLAFVDALLSSSV. Topologically, residues 78–98 are extracellular; it reads TLKMLINFLAKSKMISLSECK. Cys97 and Cys179 are disulfide-bonded. A helical transmembrane segment spans residues 99–119; that stretch reads IQLFSFAISVTTECFLLATMA. The Cytoplasmic segment spans residues 120–143; it reads YDRYVAICKPLLYPAIMTNGLCIR. The helical transmembrane segment at 144–164 threads the bilayer; the sequence is LLILSYVGGLLHALIHEGFLF. Over 165 to 195 the chain is Extracellular; sequence RLTFCNSNIIQHFYCDIIPLLKISYTDSSIN. A helical membrane pass occupies residues 196–216; the sequence is FLMVFIFAGSIQVFTIGTVLI. Residues 217-240 lie on the Cytoplasmic side of the membrane; the sequence is SYIFVLYTILKKKSVKGMRKAFST. Residues 241-261 form a helical membrane-spanning segment; that stretch reads CGAHLLSVSLYYGPLAFMYMG. Topologically, residues 262 to 271 are extracellular; the sequence is SASPQADDQD. A helical transmembrane segment spans residues 272 to 292; that stretch reads MMESLFYTVIVPLLNPMIYSL. The Cytoplasmic portion of the chain corresponds to 293–310; that stretch reads RNKQVIASFTKMFKRNDV.

Belongs to the G-protein coupled receptor 1 family.

It is found in the cell membrane. In terms of biological role, odorant receptor. This Homo sapiens (Human) protein is Olfactory receptor 5H14 (OR5H14).